The chain runs to 755 residues: Kojibiose phosphorylase (755 aa).

333–334 (WD) is a binding site for substrate. The active-site Proton donor is E473. A substrate-binding site is contributed by 573-574 (KQ).

Belongs to the glycosyl hydrolase 65 family.

It carries out the reaction kojibiose + phosphate = beta-D-glucose 1-phosphate + D-glucose. Functionally, in vitro catalyzes the phosphorolysis of D-kojibiose into beta-D-glucose 1-phosphate and D-glucose. No other disaccharides tested substitute for D-kojibiose. In the reverse direction disaccharides can be formed from beta-D-glucose 1-phosphate plus D-glucose, L-sorbose, D-sorbitol, L-iditol or 1,5-anhydro-D-glucitol, but with low efficiency. The beta-D-glucose 1-phosphate product is the substrate for YcjU (AC P77366), the next apparent enzyme in the putative biochemical pathway encoded in this locus (yjcM to ycjW). This Escherichia coli (strain K12) protein is Kojibiose phosphorylase (ycjT).